A 283-amino-acid polypeptide reads, in one-letter code: Large ribosomal subunit protein uL2 (283 aa).

2 disordered regions span residues 1 to 59 and 222 to 283; these read MSIK…GGHK and RGVA…TGGQ.

It belongs to the universal ribosomal protein uL2 family. In terms of assembly, part of the 50S ribosomal subunit. Forms a bridge to the 30S subunit in the 70S ribosome.

Its function is as follows. One of the primary rRNA binding proteins. Required for association of the 30S and 50S subunits to form the 70S ribosome, for tRNA binding and peptide bond formation. It has been suggested to have peptidyltransferase activity; this is somewhat controversial. Makes several contacts with the 16S rRNA in the 70S ribosome. In Salinibacter ruber (strain DSM 13855 / M31), this protein is Large ribosomal subunit protein uL2.